The following is a 226-amino-acid chain: Putative N-acetylmannosamine-6-phosphate 2-epimerase (226 aa).

This sequence belongs to the NanE family.

The catalysed reaction is an N-acyl-D-glucosamine 6-phosphate = an N-acyl-D-mannosamine 6-phosphate. The protein operates within amino-sugar metabolism; N-acetylneuraminate degradation; D-fructose 6-phosphate from N-acetylneuraminate: step 3/5. Its function is as follows. Converts N-acetylmannosamine-6-phosphate (ManNAc-6-P) to N-acetylglucosamine-6-phosphate (GlcNAc-6-P). The polypeptide is Putative N-acetylmannosamine-6-phosphate 2-epimerase (Mycoplasma mycoides subsp. mycoides SC (strain CCUG 32753 / NCTC 10114 / PG1)).